The primary structure comprises 354 residues: Protein RecA (354 aa).

67–74 (GPESSGKT) provides a ligand contact to ATP. Residues 331–354 (GGANSSDSKTESDENIDLETGEVF) are disordered. The segment covering 343–354 (DENIDLETGEVF) has biased composition (acidic residues).

It belongs to the RecA family.

It is found in the cytoplasm. Functionally, can catalyze the hydrolysis of ATP in the presence of single-stranded DNA, the ATP-dependent uptake of single-stranded DNA by duplex DNA, and the ATP-dependent hybridization of homologous single-stranded DNAs. It interacts with LexA causing its activation and leading to its autocatalytic cleavage. This Shewanella frigidimarina (strain NCIMB 400) protein is Protein RecA.